The primary structure comprises 265 residues: Mlc titration factor A (265 aa).

Zn(2+) contacts are provided by His111, His148, His152, and Glu211.

This sequence belongs to the MtfA family. As to quaternary structure, interacts with Mlc. Zn(2+) is required as a cofactor.

The protein localises to the cytoplasm. Involved in the modulation of the activity of the glucose-phosphotransferase system (glucose-PTS). Interacts with the transcriptional repressor Mlc, preventing its interaction with DNA and leading to the modulation of expression of genes regulated by Mlc, including ptsG, which encodes the PTS system glucose-specific EIICB component. Functionally, shows zinc-dependent metallopeptidase activity. The chain is Mlc titration factor A from Shigella sonnei (strain Ss046).